Consider the following 276-residue polypeptide: Large ribosomal subunit protein uL2cy (276 aa).

Disordered regions lie at residues 1 to 25 (MAIH…VKSN) and 225 to 276 (MNPV…RRSK). Residues 7–25 (KTSTPSTRNGTVDSQVKSN) are compositionally biased toward polar residues.

The protein belongs to the universal ribosomal protein uL2 family. As to quaternary structure, part of the 50S ribosomal subunit.

The protein resides in the plastid. The protein localises to the chloroplast. This is Large ribosomal subunit protein uL2cy (rpl2-B) from Coffea arabica (Arabian coffee).